The chain runs to 188 residues: UPF0461 protein C5orf24 homolog (188 aa).

Residue Ser37 is modified to Phosphoserine. Lys75 is covalently cross-linked (Glycyl lysine isopeptide (Lys-Gly) (interchain with G-Cter in SUMO2)). Residues 80–92 show a composition bias toward basic residues; sequence KKKNLNRSGKRGR. The tract at residues 80 to 141 is disordered; it reads KKKNLNRSGK…AGYKVSPGRP (62 aa). A compositionally biased stretch (polar residues) spans 94–107; that stretch reads SGTTKSAGYRTSTG. Residues Ser121 and Ser180 each carry the phosphoserine modification. Lys184 is covalently cross-linked (Glycyl lysine isopeptide (Lys-Gly) (interchain with G-Cter in SUMO2)).

This sequence belongs to the UPF0461 family.

The chain is UPF0461 protein C5orf24 homolog from Mus musculus (Mouse).